The chain runs to 218 residues: MTKLQGLQGLKHIKAVVFDMDGTLCLPQPWMFPAMRNAIGLEDKSIDILHFIDTLPTEKEKKEAHDRIELVEAKAMKEMQPQPGLVDIMRYLTKNGISKNICTRNVGAPVETFVKRFIPSELSRFDYIVTREFRPTKPQPDPLLHIASKLNIRPLEMIMVGDSFDDMKSGRSAGCFTVLLKNHVNGHLLLEHKELVDVSVEDLSEIIELIQNMNKESF.

The protein belongs to the HAD-like hydrolase superfamily.

The protein localises to the cytoplasm. It localises to the nucleus. This is an uncharacterized protein from Saccharomyces cerevisiae (strain ATCC 204508 / S288c) (Baker's yeast).